A 236-amino-acid chain; its full sequence is Probable glutathione S-transferase GSTU6 (236 aa).

One can recognise a GST N-terminal domain in the interval 5–84 (GELKLLGVWS…YIDEVWPGGA (80 aa)). Residues serine 15, lysine 42, valine 56, and 68 to 69 (ES) each bind glutathione. The region spanning 94 to 228 (DPYERAVARF…KLLEFRQTLL (135 aa)) is the GST C-terminal domain.

The protein belongs to the GST superfamily. Tau family. Expressed in seedling shoots and roots.

It carries out the reaction RX + glutathione = an S-substituted glutathione + a halide anion + H(+). Its function is as follows. Conjugation of reduced glutathione to a wide number of exogenous and endogenous hydrophobic electrophiles. This chain is Probable glutathione S-transferase GSTU6 (GSTU6), found in Oryza sativa subsp. japonica (Rice).